We begin with the raw amino-acid sequence, 77 residues long: Acyl carrier protein (77 aa).

Residues 1–76 enclose the Carrier domain; that stretch reads MAVFEDVRDV…DVVNYIEKLG (76 aa). An O-(pantetheine 4'-phosphoryl)serine modification is found at serine 36.

It belongs to the acyl carrier protein (ACP) family. Post-translationally, 4'-phosphopantetheine is transferred from CoA to a specific serine of apo-ACP by AcpS. This modification is essential for activity because fatty acids are bound in thioester linkage to the sulfhydryl of the prosthetic group.

It localises to the cytoplasm. Its pathway is lipid metabolism; fatty acid biosynthesis. Its function is as follows. Carrier of the growing fatty acid chain in fatty acid biosynthesis. This Campylobacter concisus (strain 13826) protein is Acyl carrier protein.